A 509-amino-acid polypeptide reads, in one-letter code: Maturase K (509 aa).

It belongs to the intron maturase 2 family. MatK subfamily.

It localises to the plastid. The protein resides in the chloroplast. In terms of biological role, usually encoded in the trnK tRNA gene intron. Probably assists in splicing its own and other chloroplast group II introns. This is Maturase K from Nicotiana glauca (Glaucous tobacco).